The chain runs to 379 residues: Glucose-1-phosphate adenylyltransferase (379 aa).

Alpha-D-glucose 1-phosphate is bound by residues G164, 179-180, and S190; that span reads EK.

This sequence belongs to the bacterial/plant glucose-1-phosphate adenylyltransferase family. In terms of assembly, homotetramer.

The catalysed reaction is alpha-D-glucose 1-phosphate + ATP + H(+) = ADP-alpha-D-glucose + diphosphate. It functions in the pathway glycan biosynthesis; glycogen biosynthesis. Functionally, involved in the biosynthesis of ADP-glucose, a building block required for the elongation reactions to produce glycogen. Catalyzes the reaction between ATP and alpha-D-glucose 1-phosphate (G1P) to produce pyrophosphate and ADP-Glc. This is Glucose-1-phosphate adenylyltransferase from Streptococcus agalactiae serotype Ia (strain ATCC 27591 / A909 / CDC SS700).